The sequence spans 34 residues: Non-toxic venom protein (34 aa).

Residues 1 to 34 form the LCN-type CS-alpha/beta domain; the sequence is KEGYPTNSEGCKITXLFNDPYCKGXCINLSTQAD.

As to expression, expressed by the venom gland.

It localises to the secreted. Functionally, does not cause symptoms of intoxication, paralysis or death in insects (A.domestica). The chain is Non-toxic venom protein from Rhopalurus junceus (Caribbean blue scorpion).